Here is a 1027-residue protein sequence, read N- to C-terminus: Xyloglucanase (1027 aa).

The first 32 residues, Met1 to Ala32, serve as a signal peptide directing secretion. Asp70 functions as the Nucleophile in the catalytic mechanism. 4 BNR repeats span residues Arg134–Gln143, Trp185–Lys196, Tyr252–Thr262, and Phe357–Thr367. Asp479 acts as the Proton donor in catalysis. BNR repeat units lie at residues Ser537–Tyr545 and Phe717–Val727. One can recognise a CBM3 domain in the interval Pro876–Pro1027.

It belongs to the glycosyl hydrolase 74 family.

Functionally, hydrolyzes the glucosidic bonds of unbranched Glc residues in tamarind seed xyloglucan, producing XXXG, XLXG, XXLG and XLLG. May have a dual endo- and exo- mode of action towards xyloglucan, or may have an endo-processive mode of action. The chain is Xyloglucanase from Paenibacillus sp.